A 789-amino-acid chain; its full sequence is Probable Xaa-Pro aminopeptidase SNOG_02267 (789 aa).

Mn(2+)-binding residues include Asp-240, Asp-251, Glu-375, and Glu-416. 2 disordered regions span residues 607-658 and 670-704; these read SMSK…TGLA and NHVSESPTPSQRRAGGCTPHWRGQNRADQSGDDAL. The segment covering 622 to 637 has biased composition (polar residues); the sequence is VISQKQIRNRRSVSST. Residues 638–650 are compositionally biased toward basic and acidic residues; the sequence is ARHDLRGDRERPQ.

Belongs to the peptidase M24B family. Mn(2+) serves as cofactor.

It carries out the reaction Release of any N-terminal amino acid, including proline, that is linked to proline, even from a dipeptide or tripeptide.. Functionally, catalyzes the removal of a penultimate prolyl residue from the N-termini of peptides. This Phaeosphaeria nodorum (strain SN15 / ATCC MYA-4574 / FGSC 10173) (Glume blotch fungus) protein is Probable Xaa-Pro aminopeptidase SNOG_02267.